A 380-amino-acid chain; its full sequence is Chaperone protein DnaJ (380 aa).

Residues Asp5 to Gly69 form the J domain. The CR-type zinc-finger motif lies at Gly135–Arg217. Residues Cys148, Cys151, Cys165, Cys168, Cys191, Cys194, Cys205, and Cys208 each coordinate Zn(2+). 4 CXXCXGXG motif repeats span residues Cys148–Gly155, Cys165–Gly172, Cys191–Gly198, and Cys205–Gly212.

This sequence belongs to the DnaJ family. In terms of assembly, homodimer. Zn(2+) serves as cofactor.

It localises to the cytoplasm. Its function is as follows. Participates actively in the response to hyperosmotic and heat shock by preventing the aggregation of stress-denatured proteins and by disaggregating proteins, also in an autonomous, DnaK-independent fashion. Unfolded proteins bind initially to DnaJ; upon interaction with the DnaJ-bound protein, DnaK hydrolyzes its bound ATP, resulting in the formation of a stable complex. GrpE releases ADP from DnaK; ATP binding to DnaK triggers the release of the substrate protein, thus completing the reaction cycle. Several rounds of ATP-dependent interactions between DnaJ, DnaK and GrpE are required for fully efficient folding. Also involved, together with DnaK and GrpE, in the DNA replication of plasmids through activation of initiation proteins. In Parageobacillus thermoglucosidasius (Geobacillus thermoglucosidasius), this protein is Chaperone protein DnaJ.